A 513-amino-acid polypeptide reads, in one-letter code: Bifunctional purine biosynthesis protein PurH (513 aa).

The MGS-like domain occupies 1 to 146 (MPRFALLSVS…KNHAHLTILT (146 aa)).

It belongs to the PurH family.

It catalyses the reaction (6R)-10-formyltetrahydrofolate + 5-amino-1-(5-phospho-beta-D-ribosyl)imidazole-4-carboxamide = 5-formamido-1-(5-phospho-D-ribosyl)imidazole-4-carboxamide + (6S)-5,6,7,8-tetrahydrofolate. The enzyme catalyses IMP + H2O = 5-formamido-1-(5-phospho-D-ribosyl)imidazole-4-carboxamide. The protein operates within purine metabolism; IMP biosynthesis via de novo pathway; 5-formamido-1-(5-phospho-D-ribosyl)imidazole-4-carboxamide from 5-amino-1-(5-phospho-D-ribosyl)imidazole-4-carboxamide (10-formyl THF route): step 1/1. It participates in purine metabolism; IMP biosynthesis via de novo pathway; IMP from 5-formamido-1-(5-phospho-D-ribosyl)imidazole-4-carboxamide: step 1/1. This is Bifunctional purine biosynthesis protein PurH from Synechococcus elongatus (strain ATCC 33912 / PCC 7942 / FACHB-805) (Anacystis nidulans R2).